The sequence spans 326 residues: GTP 3',8-cyclase (326 aa).

The 215-residue stretch at 6–220 folds into the Radical SAM core domain; that stretch reads SFGRRINYLR…DRISASYELE (215 aa). Arg15 is a GTP binding site. 2 residues coordinate [4Fe-4S] cluster: Cys22 and Cys26. Tyr28 is an S-adenosyl-L-methionine binding site. Position 29 (Cys29) interacts with [4Fe-4S] cluster. Arg65 contacts GTP. Residue Gly69 coordinates S-adenosyl-L-methionine. Thr96 is a GTP binding site. Position 120 (Ser120) interacts with S-adenosyl-L-methionine. Lys157 contacts GTP. Met191 lines the S-adenosyl-L-methionine pocket. The [4Fe-4S] cluster site is built by Cys254 and Cys257. 259 to 261 is a binding site for GTP; that stretch reads RVR. Cys271 lines the [4Fe-4S] cluster pocket.

It belongs to the radical SAM superfamily. MoaA family. As to quaternary structure, monomer and homodimer. [4Fe-4S] cluster serves as cofactor.

The enzyme catalyses GTP + AH2 + S-adenosyl-L-methionine = (8S)-3',8-cyclo-7,8-dihydroguanosine 5'-triphosphate + 5'-deoxyadenosine + L-methionine + A + H(+). Its pathway is cofactor biosynthesis; molybdopterin biosynthesis. Catalyzes the cyclization of GTP to (8S)-3',8-cyclo-7,8-dihydroguanosine 5'-triphosphate. The chain is GTP 3',8-cyclase from Geobacter sulfurreducens (strain ATCC 51573 / DSM 12127 / PCA).